The chain runs to 425 residues: DNA replication and repair protein RecF (425 aa).

30–37 (GPNGHGKT) contributes to the ATP binding site.

This sequence belongs to the RecF family.

Its subcellular location is the cytoplasm. Functionally, the RecF protein is involved in DNA metabolism; it is required for DNA replication and normal SOS inducibility. RecF binds preferentially to single-stranded, linear DNA. It also seems to bind ATP. The chain is DNA replication and repair protein RecF from Corynebacterium jeikeium (strain K411).